A 358-amino-acid chain; its full sequence is Probable branched-chain-amino-acid aminotransferase (358 aa).

Lys-196 is subject to N6-(pyridoxal phosphate)lysine.

The protein belongs to the class-IV pyridoxal-phosphate-dependent aminotransferase family. Pyridoxal 5'-phosphate serves as cofactor.

It carries out the reaction L-leucine + 2-oxoglutarate = 4-methyl-2-oxopentanoate + L-glutamate. It catalyses the reaction L-isoleucine + 2-oxoglutarate = (S)-3-methyl-2-oxopentanoate + L-glutamate. The catalysed reaction is L-valine + 2-oxoglutarate = 3-methyl-2-oxobutanoate + L-glutamate. The protein operates within amino-acid biosynthesis; L-isoleucine biosynthesis; L-isoleucine from 2-oxobutanoate: step 4/4. It participates in amino-acid biosynthesis; L-leucine biosynthesis; L-leucine from 3-methyl-2-oxobutanoate: step 4/4. It functions in the pathway amino-acid biosynthesis; L-valine biosynthesis; L-valine from pyruvate: step 4/4. In terms of biological role, acts on leucine, isoleucine and valine. This chain is Probable branched-chain-amino-acid aminotransferase (ilvE), found in Staphylococcus aureus (strain N315).